A 578-amino-acid chain; its full sequence is Sulfite reductase [NADPH] hemoprotein beta-component (578 aa).

The segment at 1–21 (MTNTLAGPDRSRDISQPLEKL) is disordered. Cys-443, Cys-449, Cys-488, and Cys-492 together coordinate [4Fe-4S] cluster. Cys-492 provides a ligand contact to siroheme.

This sequence belongs to the nitrite and sulfite reductase 4Fe-4S domain family. Alpha(8)-beta(8). The alpha component is a flavoprotein, the beta component is a hemoprotein. Siroheme is required as a cofactor. It depends on [4Fe-4S] cluster as a cofactor.

It carries out the reaction hydrogen sulfide + 3 NADP(+) + 3 H2O = sulfite + 3 NADPH + 4 H(+). It participates in sulfur metabolism; hydrogen sulfide biosynthesis; hydrogen sulfide from sulfite (NADPH route): step 1/1. Its function is as follows. Component of the sulfite reductase complex that catalyzes the 6-electron reduction of sulfite to sulfide. This is one of several activities required for the biosynthesis of L-cysteine from sulfate. This Methylocella silvestris (strain DSM 15510 / CIP 108128 / LMG 27833 / NCIMB 13906 / BL2) protein is Sulfite reductase [NADPH] hemoprotein beta-component.